Consider the following 143-residue polypeptide: SsrA-binding protein (143 aa).

The protein belongs to the SmpB family.

Its subcellular location is the cytoplasm. Its function is as follows. Required for rescue of stalled ribosomes mediated by trans-translation. Binds to transfer-messenger RNA (tmRNA), required for stable association of tmRNA with ribosomes. tmRNA and SmpB together mimic tRNA shape, replacing the anticodon stem-loop with SmpB. tmRNA is encoded by the ssrA gene; the 2 termini fold to resemble tRNA(Ala) and it encodes a 'tag peptide', a short internal open reading frame. During trans-translation Ala-aminoacylated tmRNA acts like a tRNA, entering the A-site of stalled ribosomes, displacing the stalled mRNA. The ribosome then switches to translate the ORF on the tmRNA; the nascent peptide is terminated with the 'tag peptide' encoded by the tmRNA and targeted for degradation. The ribosome is freed to recommence translation, which seems to be the essential function of trans-translation. In Mycoplasmopsis synoviae (strain 53) (Mycoplasma synoviae), this protein is SsrA-binding protein.